The primary structure comprises 429 residues: 3-phosphoshikimate 1-carboxyvinyltransferase (429 aa).

3-phosphoshikimate is bound by residues Lys-22, Ser-23, and Arg-27. Lys-22 contributes to the phosphoenolpyruvate binding site. Phosphoenolpyruvate-binding residues include Gly-94 and Arg-122. 3-phosphoshikimate-binding residues include Ser-167, Gln-169, Asp-315, and Lys-342. Gln-169 is a binding site for phosphoenolpyruvate. The active-site Proton acceptor is Asp-315. The phosphoenolpyruvate site is built by Arg-346 and Arg-388.

The protein belongs to the EPSP synthase family. Monomer.

The protein resides in the cytoplasm. The catalysed reaction is 3-phosphoshikimate + phosphoenolpyruvate = 5-O-(1-carboxyvinyl)-3-phosphoshikimate + phosphate. It participates in metabolic intermediate biosynthesis; chorismate biosynthesis; chorismate from D-erythrose 4-phosphate and phosphoenolpyruvate: step 6/7. Its function is as follows. Catalyzes the transfer of the enolpyruvyl moiety of phosphoenolpyruvate (PEP) to the 5-hydroxyl of shikimate-3-phosphate (S3P) to produce enolpyruvyl shikimate-3-phosphate and inorganic phosphate. The protein is 3-phosphoshikimate 1-carboxyvinyltransferase of Citrifermentans bemidjiense (strain ATCC BAA-1014 / DSM 16622 / JCM 12645 / Bem) (Geobacter bemidjiensis).